Here is a 616-residue protein sequence, read N- to C-terminus: E3 ubiquitin-protein ligase DTX4 (616 aa).

WWE domains lie at 1-78 (MLLA…PVRR) and 79-155 (NYYD…RVRR). Disordered stretches follow at residues 223–254 (VGKL…PSQV) and 355–387 (PPPV…GKTP). The span at 375–384 (KTTKKQAKKG) shows a compositional bias: basic residues. The RING-type; atypical zinc-finger motif lies at 406-465 (CTICMERLTAPSGYKGPQPTVKPDLVGKLSRCGHIYHIYCLVAMYNNGNKDGSLQCPTCK).

This sequence belongs to the Deltex family. As to quaternary structure, interacts with NLRP4. In terms of tissue distribution, expressed in brain, testis, embryonic fibroblasts and thymocytes.

Its subcellular location is the cytoplasm. The catalysed reaction is S-ubiquitinyl-[E2 ubiquitin-conjugating enzyme]-L-cysteine + [acceptor protein]-L-lysine = [E2 ubiquitin-conjugating enzyme]-L-cysteine + N(6)-ubiquitinyl-[acceptor protein]-L-lysine.. It participates in protein modification; protein ubiquitination. Functionally, functions as a ubiquitin ligase protein in vivo, mediating 'Lys48'-linked polyubiquitination and promoting degradation of TBK1, targeting to TBK1 requires interaction with NLRP4. Regulator of Notch signaling, a signaling pathway involved in cell-cell communications that regulates a broad spectrum of cell-fate determinations. The sequence is that of E3 ubiquitin-protein ligase DTX4 (Dtx4) from Mus musculus (Mouse).